The following is a 96-amino-acid chain: UPF0235 protein Sputcn32_2690 (96 aa).

This sequence belongs to the UPF0235 family.

This is UPF0235 protein Sputcn32_2690 from Shewanella putrefaciens (strain CN-32 / ATCC BAA-453).